Here is a 166-residue protein sequence, read N- to C-terminus: Putative membrane protein 164 (166 aa).

Residues 1–4 (MYHP) lie on the Intravirion side of the membrane. A helical membrane pass occupies residues 5–25 (VVQVLIGLILVIILILGFYHL). At 26–166 (KKKSCKTDTD…TIMGIARNIL (141 aa)) the chain is on the virion surface side.

It belongs to the asfivirus envelope protein p22 family.

The protein resides in the virion membrane. Its subcellular location is the host cell membrane. The chain is Putative membrane protein 164 from Ornithodoros (relapsing fever ticks).